Consider the following 312-residue polypeptide: Taste receptor type 2 member 7 (312 aa).

Over 1 to 9 (MTYETDTTL) the chain is Extracellular. Residues 10–30 (MLVAVGEALVGILGNAFIALV) traverse the membrane as a helical segment. At 31–49 (NFMGWMKNRKIASIDLILS) the chain is on the cytoplasmic side. A helical transmembrane segment spans residues 50 to 70 (SVAMSRICLQCIILLDCIILV). Residues 71–101 (QYPDTYNRGKEMRTVDFFWTLTNHLSVWFAT) are Extracellular-facing. Residues 102 to 122 (CLSIFYLFKIANFFHPLFLWI) traverse the membrane as a helical segment. The Cytoplasmic segment spans residues 123-128 (KWRIDK). A helical membrane pass occupies residues 129 to 149 (LILRTLLACVIISLCFSLPVT). Residues 150-187 (ENLSDDFRRCVKTKERINSTLRCKVNKAGHASVKVNLN) lie on the Extracellular side of the membrane. 2 N-linked (GlcNAc...) asparagine glycosylation sites follow: N151 and N167. The chain crosses the membrane as a helical span at residues 188–208 (LVMLFPFSVSLVSFLLLILSL). Over 209 to 235 (WRHTRQIQLSVTGYKDPSTTAHVKAMK) the chain is Cytoplasmic. The chain crosses the membrane as a helical span at residues 236 to 256 (AVISFLALFVVYCLAFLIATS). Topologically, residues 257–266 (SYFMPESELA) are extracellular. The helical transmembrane segment at 267–287 (VIWGELIALIYPSSHSFILIL) threads the bilayer. At 288 to 312 (GSSKLKQASVRVLCRVKTMLKGKKY) the chain is on the cytoplasmic side.

It belongs to the G-protein coupled receptor T2R family. As to expression, expressed in subsets of taste receptor cells of the tongue and palate epithelium and exclusively in gustducin-positive cells. Expressed in 15% taste bud cells in circumvallate and foliate papillae but only in 2% in fungiform papillae. Expressed in gastric and duodenal tissues.

It localises to the membrane. Gustducin-coupled receptor implicated in the perception of bitter compounds in the oral cavity and the gastrointestinal tract. Signals through PLCB2 and the calcium-regulated cation channel TRPM5. The polypeptide is Taste receptor type 2 member 7 (Tas2r7) (Mus musculus (Mouse)).